A 312-amino-acid chain; its full sequence is Olfactory receptor 6C74 (312 aa).

At 1–23 (MRNHTTVANFILLGLTDDPQLQV) the chain is on the extracellular side. N-linked (GlcNAc...) asparagine glycosylation occurs at asparagine 3. A helical transmembrane segment spans residues 24-44 (IIFLLLFFTYMLSITGNLTII). At 45–63 (TLTLLDLHLKTPMYFFLRN) the chain is on the cytoplasmic side. A helical membrane pass occupies residues 64–84 (FSFLEVSFTTVYIPKFLVSMA). Over 85–95 (TGDKTISYNDC) the chain is Extracellular. Cysteine 95 and cysteine 177 are disulfide-bonded. Residues 96–116 (AAQLFFTILLGATEFFLLAAM) traverse the membrane as a helical segment. Residues 117–140 (SYERYVAICKPLHYTTIMSSRVCS) are Cytoplasmic-facing. The helical transmembrane segment at 141 to 161 (LLVFASWMAGFLIIFPPLLMG) threads the bilayer. The Extracellular segment spans residues 162–194 (LQLDFCAANTVDHFFCDVSPILQLSCTDTDIIE). Residues 195-215 (LMMLLSAILTLLVTLVLVILS) traverse the membrane as a helical segment. Over 216-237 (YTNIIRTILKIPSSQQRKKAFS) the chain is Cytoplasmic. Residues 238–258 (TCSSHMVVVSISYGSCIFMYV) form a helical membrane-spanning segment. Residues 259–269 (KPSAKERVSLN) are Extracellular-facing. A helical transmembrane segment spans residues 270-290 (KGIALLSTSVAPMLNPFIYTL). The Cytoplasmic portion of the chain corresponds to 291–312 (RNKQVKDVFKHTVKKIELFSMK).

It belongs to the G-protein coupled receptor 1 family.

It localises to the cell membrane. Odorant receptor. This is Olfactory receptor 6C74 (OR6C74) from Homo sapiens (Human).